Consider the following 465-residue polypeptide: E3 ubiquitin-protein ligase TRIM15 (465 aa).

The RING-type zinc finger occupies 16–61 (CTLCVGPLEDAVTAPCGHTFCRLCLPTLSQMGAQSSGKILLCPLCQ). Residues 78–119 (LGETYCEEHGEKIYFFCENDAEFLCVFCREGPTHQAHTVGFL) form a B box-type zinc finger. Zn(2+) is bound by residues Cys-83, His-86, Cys-105, and His-111. Positions 126–229 (YRDRLRSRLE…VKELEEKCQQ (104 aa)) form a coiled coil. Residues 276-465 (EMMRMFSENL…KKGSCLTLKG (190 aa)) enclose the B30.2/SPRY domain.

It belongs to the TRIM/RBCC family. Interacts with paxillin/PXN; this interaction recruits TRIM15 to focal adhesions. Interacts with TRIM8; this interaction prevents TRIM8 cytoplasmic translocation.

It is found in the cytoplasm. It localises to the nucleus. Its subcellular location is the cell junction. The protein localises to the focal adhesion. It catalyses the reaction S-ubiquitinyl-[E2 ubiquitin-conjugating enzyme]-L-cysteine + [acceptor protein]-L-lysine = [E2 ubiquitin-conjugating enzyme]-L-cysteine + N(6)-ubiquitinyl-[acceptor protein]-L-lysine.. Its function is as follows. E3 ubiquitin ligase that plays a role in several processes including innate antiviral immnity, cell migration and chemotaxis. Acts as a 'Lys-63'-specific ubiquitin ligase for MAPK1/ERK2 and MAPK3/ERK1, promoting their activation by facilitating their interaction with MAP2K1 and MAP2K2. Also plays a role in cell migration and chemotaxis by acting as a stable focal adhesion component upon recruitment by multi-adapter protein paxillin/PXN. Functions in the RIGI-mediated interferon induction pathway upstream or at the level of MAVS. Inhibits NF-kappa-B activation by turnover of 'Lys-63'-linked ubiquitination of MAP3K7/TAK1. Mechanistically, prevents TRIM8 cytoplasmic translocation and thus inhibits TRIM8-mediated 'Lys-63'-linked polyubiquitination of MAP3K7/TAK1 in the cytoplasm. Also has an important regulatory effect on the activation of hepatic stellate cells (HSCs). The chain is E3 ubiquitin-protein ligase TRIM15 (TRIM15) from Macaca mulatta (Rhesus macaque).